Reading from the N-terminus, the 395-residue chain is Phosphoglycerate kinase (395 aa).

Substrate contacts are provided by residues 21–23 (DFN), R36, 59–62 (HLGR), R120, and R153. ATP contacts are provided by residues K203, E325, and 351–354 (GGDS).

The protein belongs to the phosphoglycerate kinase family. Monomer.

Its subcellular location is the cytoplasm. It catalyses the reaction (2R)-3-phosphoglycerate + ATP = (2R)-3-phospho-glyceroyl phosphate + ADP. Its pathway is carbohydrate degradation; glycolysis; pyruvate from D-glyceraldehyde 3-phosphate: step 2/5. The protein is Phosphoglycerate kinase of Roseiflexus sp. (strain RS-1).